Reading from the N-terminus, the 520-residue chain is Cytochrome P450 6d3 (520 aa).

Cys-461 provides a ligand contact to heme.

It belongs to the cytochrome P450 family. Requires heme as cofactor.

It is found in the endoplasmic reticulum membrane. The protein resides in the microsome membrane. Its function is as follows. Metabolizes pyrethroid insecticides and other xenobiotics. The sequence is that of Cytochrome P450 6d3 (CYP6D3) from Musca domestica (House fly).